A 119-amino-acid chain; its full sequence is Large ribosomal subunit protein bL12 (119 aa).

Belongs to the bacterial ribosomal protein bL12 family. In terms of assembly, homodimer. Part of the ribosomal stalk of the 50S ribosomal subunit. Forms a multimeric L10(L12)X complex, where L10 forms an elongated spine to which 2 to 4 L12 dimers bind in a sequential fashion. Binds GTP-bound translation factors.

In terms of biological role, forms part of the ribosomal stalk which helps the ribosome interact with GTP-bound translation factors. Is thus essential for accurate translation. This chain is Large ribosomal subunit protein bL12, found in Bacillus cytotoxicus (strain DSM 22905 / CIP 110041 / 391-98 / NVH 391-98).